Reading from the N-terminus, the 88-residue chain is Small ribosomal subunit protein uS15 (88 aa).

Belongs to the universal ribosomal protein uS15 family. Part of the 30S ribosomal subunit. Forms a bridge to the 50S subunit in the 70S ribosome, contacting the 23S rRNA.

Functionally, one of the primary rRNA binding proteins, it binds directly to 16S rRNA where it helps nucleate assembly of the platform of the 30S subunit by binding and bridging several RNA helices of the 16S rRNA. Forms an intersubunit bridge (bridge B4) with the 23S rRNA of the 50S subunit in the ribosome. This Variovorax paradoxus (strain S110) protein is Small ribosomal subunit protein uS15.